The following is a 393-amino-acid chain: METFLFTSESVNEGHPDKLCDQISDAVLDACLEQDPESKVACETCTKTNLVMVFGEITTKAIVDYEKIVRDTCRNIGFVSDDVGLDADNCKVLVYIEQQSPDIAQGVHGHLTKRPEEIGAGDQGHMFGYATDETPELMPLSHVLATKLGARLTEVRKNGTCAWLRPDGKTQVTVEYSNDNGAMVPIRVHTVLISTQHDETVTNDEIARDLKEHVIKPVIPEKYLDENTIFHLNPSGRFVIGGPHGDAGLTGRKIIIDTYGGWGAHGGGAFSGKDPTKVDRSGAYIVRQAAKSIVASGLARRCIVQVSYAIGVPEPLSVFVDTYGTGKIPDREILKIVKENFDFRPGMMSINLDLKRGGNRRFLKTAAYGHFGRDDPDFTWEVVKPLKWEKPQD.

E9 is a Mg(2+) binding site. Residue H15 participates in ATP binding. E43 serves as a coordination point for K(+). E56 and Q99 together coordinate L-methionine. ATP-binding positions include 167–169 (DGK), 235–238 (SGRF), D246, 252–253 (RK), A269, K273, and K277. D246 contacts L-methionine. K277 provides a ligand contact to L-methionine.

This sequence belongs to the AdoMet synthase family. As to quaternary structure, homotetramer. It depends on Mn(2+) as a cofactor. Mg(2+) is required as a cofactor. Requires Co(2+) as cofactor. The cofactor is K(+). Mostly expressed in stems.

It is found in the cytoplasm. It catalyses the reaction L-methionine + ATP + H2O = S-adenosyl-L-methionine + phosphate + diphosphate. It functions in the pathway amino-acid biosynthesis; S-adenosyl-L-methionine biosynthesis; S-adenosyl-L-methionine from L-methionine: step 1/1. Catalyzes the formation of S-adenosylmethionine from methionine and ATP. The reaction comprises two steps that are both catalyzed by the same enzyme: formation of S-adenosylmethionine (AdoMet) and triphosphate, and subsequent hydrolysis of the triphosphate. This is S-adenosylmethionine synthase 1 (SAM1) from Solanum lycopersicum (Tomato).